The primary structure comprises 2210 residues: Mediator of RNA polymerase II transcription subunit 13-like (2210 aa).

Over residues 391 to 400 (SKRSQMSTPT) the composition is skewed to polar residues. Disordered regions lie at residues 391–414 (SKRSQMSTPTLEEEPASNPATWDF), 435–489 (AVGP…PFHH), and 519–582 (VSSS…NPAL). A compositionally biased stretch (low complexity) spans 445-458 (SQPGFSAGPSSSSS). Basic and acidic residues predominate over residues 468-480 (KTAERQEKGDKLQ). Over residues 533-544 (SRNTSKQMNLNP) the composition is skewed to polar residues. The segment covering 551–560 (PISPLPPTLS) has biased composition (pro residues). Ser553 and Ser560 each carry phosphoserine. Residues 669-673 (LQRLL) carry the LXXLL motif 1 motif. A compositionally biased stretch (basic and acidic residues) spans 736-752 (GTEKDSLKKNKSEDGFG). The segment at 736-770 (GTEKDSLKKNKSEDGFGTKDVTTPGHSTPVPDGKN) is disordered. A phosphoserine mark is found at Ser817, Ser826, and Ser923. A disordered region spans residues 1016–1096 (PQMNTPVTLN…STTRPLNSVE (81 aa)). Over residues 1025-1036 (NSAAPASNSGAG) the composition is skewed to low complexity. Residues 1077–1092 (TDQGSPASTPSTTRPL) show a composition bias toward polar residues. An LXXLL motif 2 motif is present at residues 1225–1229 (LLLLL). The interval 1380–1401 (LPIPTLLVGYDKDFLTISPFSL) is leucine-zipper. 2 disordered regions span residues 1530–1656 (QTPP…VTER) and 2045–2080 (GNLHSSPNSSPVPSPGSPSGIGVGSHFQHSRSQGER). Residues 1531–1608 (TPPAAAQGQA…ISTTSSSGFS (78 aa)) are compositionally biased toward low complexity. Residues 1615–1629 (NPSTGGISADRTQGN) are compositionally biased toward polar residues. The span at 1637–1650 (DPGQSSSQPSQDGQ) shows a compositional bias: low complexity. At Ser2083 the chain carries Phosphoserine.

This sequence belongs to the Mediator complex subunit 13 family. Component of the Mediator complex, which is composed of MED1, MED4, MED6, MED7, MED8, MED9, MED10, MED11, MED12, MED13, MED13L, MED14, MED15, MED16, MED17, MED18, MED19, MED20, MED21, MED22, MED23, MED24, MED25, MED26, MED27, MED29, MED30, MED31, CCNC, CDK8 and CDC2L6/CDK11. The MED12, MED13, CCNC and CDK8 subunits form a distinct module termed the CDK8 module. Mediator containing the CDK8 module is less active than Mediator lacking this module in supporting transcriptional activation. Individual preparations of the Mediator complex lacking one or more distinct subunits have been variously termed ARC, CRSP, DRIP, PC2, SMCC and TRAP. Highly expressed in brain (cerebellum), heart (aorta), skeletal muscle, kidney, placenta and peripheral blood leukocytes. Highly expressed in fetal brain.

The protein localises to the nucleus. Its function is as follows. Component of the Mediator complex, a coactivator involved in the regulated transcription of nearly all RNA polymerase II-dependent genes. Mediator functions as a bridge to convey information from gene-specific regulatory proteins to the basal RNA polymerase II transcription machinery. Mediator is recruited to promoters by direct interactions with regulatory proteins and serves as a scaffold for the assembly of a functional preinitiation complex with RNA polymerase II and the general transcription factors. This subunit may specifically regulate transcription of targets of the Wnt signaling pathway and SHH signaling pathway. In Homo sapiens (Human), this protein is Mediator of RNA polymerase II transcription subunit 13-like (MED13L).